The chain runs to 648 residues: 1-deoxy-D-xylulose-5-phosphate synthase (648 aa).

Thiamine diphosphate is bound by residues H79 and G120–A122. A Mg(2+)-binding site is contributed by D152. Thiamine diphosphate contacts are provided by residues G153–S154, N181, F293, and E377. A Mg(2+)-binding site is contributed by N181.

The protein belongs to the transketolase family. DXPS subfamily. As to quaternary structure, homodimer. Mg(2+) serves as cofactor. Thiamine diphosphate is required as a cofactor.

The catalysed reaction is D-glyceraldehyde 3-phosphate + pyruvate + H(+) = 1-deoxy-D-xylulose 5-phosphate + CO2. The protein operates within metabolic intermediate biosynthesis; 1-deoxy-D-xylulose 5-phosphate biosynthesis; 1-deoxy-D-xylulose 5-phosphate from D-glyceraldehyde 3-phosphate and pyruvate: step 1/1. Functionally, catalyzes the acyloin condensation reaction between C atoms 2 and 3 of pyruvate and glyceraldehyde 3-phosphate to yield 1-deoxy-D-xylulose-5-phosphate (DXP). The protein is 1-deoxy-D-xylulose-5-phosphate synthase of Bacteroides fragilis (strain ATCC 25285 / DSM 2151 / CCUG 4856 / JCM 11019 / LMG 10263 / NCTC 9343 / Onslow / VPI 2553 / EN-2).